We begin with the raw amino-acid sequence, 206 residues long: Guanylate kinase (206 aa).

The Guanylate kinase-like domain maps to Phe5–Lys183. Gly12–Ser19 lines the ATP pocket.

This sequence belongs to the guanylate kinase family.

It is found in the cytoplasm. The catalysed reaction is GMP + ATP = GDP + ADP. Functionally, essential for recycling GMP and indirectly, cGMP. The sequence is that of Guanylate kinase from Helicobacter pylori (strain HPAG1).